We begin with the raw amino-acid sequence, 220 residues long: Redox-sensing transcriptional repressor Rex (220 aa).

Residues 17–56 constitute a DNA-binding region (H-T-H motif); sequence LYARSLRYLLQEGVESVSSQELGDRINVTAAQIRKDLSYF. 91–96 provides a ligand contact to NAD(+); the sequence is GIGHLG.

Belongs to the transcriptional regulatory Rex family. In terms of assembly, homodimer.

The protein localises to the cytoplasm. Its function is as follows. Modulates transcription in response to changes in cellular NADH/NAD(+) redox state. The protein is Redox-sensing transcriptional repressor Rex of Roseiflexus sp. (strain RS-1).